Here is a 510-residue protein sequence, read N- to C-terminus: Histidine ammonia-lyase (510 aa).

Positions 143–145 form a cross-link, 5-imidazolinone (Ala-Gly); that stretch reads ASG. Ser144 is modified (2,3-didehydroalanine (Ser)).

Belongs to the PAL/histidase family. In terms of processing, contains an active site 4-methylidene-imidazol-5-one (MIO), which is formed autocatalytically by cyclization and dehydration of residues Ala-Ser-Gly.

It localises to the cytoplasm. The enzyme catalyses L-histidine = trans-urocanate + NH4(+). Its pathway is amino-acid degradation; L-histidine degradation into L-glutamate; N-formimidoyl-L-glutamate from L-histidine: step 1/3. In Psychromonas ingrahamii (strain DSM 17664 / CCUG 51855 / 37), this protein is Histidine ammonia-lyase.